The chain runs to 82 residues: Opistoporin-1 (82 aa).

The N-terminal stretch at 1–22 is a signal peptide; it reads MNRKLLFVTLMVTMLVMQPSEG. A propeptide spanning residues 67–82 is cleaved from the precursor; sequence EAGQMPFDEFMDILYE.

In terms of tissue distribution, expressed by the venom gland.

Its subcellular location is the secreted. It localises to the target cell membrane. In terms of biological role, at high concentrations, acts as a pore former in cellular membranes and causes the leakage of the cells. At submicromolar concentrations, degranulates granulocytes and has a weak hemolytic activity against human erythrocytes. Also strongly inhibits the production of superoxide anions. Has a strong antibacterial activity against Gram-negative bacteria but is less active against Gram-positive bacteria. Also has antifungal activity. This chain is Opistoporin-1, found in Opistophthalmus carinatus (African yellow leg scorpion).